A 181-amino-acid chain; its full sequence is Proteinase inhibitor B (181 aa).

Positions 1–24 (MAASNALLLISGALLISLAVLCQG) are cleaved as a signal peptide. Disulfide bonds link Cys67–Cys113, Cys134–Cys143, and Cys136–Cys139.

It belongs to the protease inhibitor I3 (leguminous Kunitz-type inhibitor) family.

It is found in the secreted. Functionally, possesses two reactive sites. Inhibits two molecules of trypsin simultaneously. Inhibits efficiently kallikrein, but chymotrypsin weakly. This chain is Proteinase inhibitor B, found in Sagittaria sagittifolia (Arrowhead).